The following is a 141-amino-acid chain: UPF0310 protein SSA_0254 (141 aa).

The protein belongs to the UPF0310 family.

The polypeptide is UPF0310 protein SSA_0254 (Streptococcus sanguinis (strain SK36)).